The chain runs to 211 residues: Degradation in the endoplasmic reticulum protein 1 (211 aa).

Met-1 is modified (N-acetylmethionine). At 1 to 14 the chain is on the cytoplasmic side; the sequence is MDAVILNLLGDIPL. Residues 15 to 32 traverse the membrane as a helical segment; it reads VTRLWTIGCLVLSGLTSL. At 33–67 the chain is on the lumenal side; sequence RIVDPGKVVYSYDLVFKKGQYGRLLYSIFDYGAFN. Residues 68–85 form a helical membrane-spanning segment; it reads WISMINIFVSANHLSTLE. Topologically, residues 86–92 are cytoplasmic; it reads NSFNLRR. Residues 93 to 109 form a helical membrane-spanning segment; the sequence is KFCWIIFLLLVILVKMT. Over 110–117 the chain is Lumenal; that stretch reads SIEQPAAS. Residues 118-133 form a helical membrane-spanning segment; that stretch reads LGVLLHENLVYYELKK. Residues 134–149 lie on the Cytoplasmic side of the membrane; it reads NGNQMNVRFFGAIDVS. Residues 150–165 form a helical membrane-spanning segment; sequence PSIFPIYMNAVMYFVY. The Lumenal segment spans residues 166-168; it reads KRS. The helical transmembrane segment at 169-189 threads the bilayer; it reads WLEIAMNFMPGHVIYYMDDII. Residues 190-211 are Cytoplasmic-facing; it reads GKIYGIDLCKSPYDWFRNTETP.

It belongs to the derlin family. As to quaternary structure, component of the HRD1 ubiquitin ligase complex which contains the E3 ligase HRD1, its cofactors HRD3, USA1 and DER1, substrate recruiting factor YOS9 and CDC48-binding protein UBX2. Within the complex, interacts with USA1 (via C-terminus). In ERAD-L, HRD3 and YOS9 jointly bind misfolded glycoproteins in the endoplasmic reticulum (ER) lumen. Movement of ERAD-L substrates through the ER membrane is facilitated by HRD1 and DER1 which have lateral gates facing each other and which distort the membrane region between the lateral gates, making it much thinner than a normal phospholipid bilayer. Substrates insert into the membrane as a hairpin loop with one strand interacting with DER1 and the other with HRD1. The HRD1 complex interacts with the heterotrimeric CDC48-NPL4-UFD1 ATPase complex which is recruited by UBX2 via its interaction with CDC48 and which moves ubiquitinated substrates to the cytosol for targeting to the proteasome. Post-translationally, N-terminally acetylated by acetyltransferase NatB which enhances DER1 stability and is required for ERAD-L function.

Its subcellular location is the endoplasmic reticulum membrane. In terms of biological role, component of the endoplasmic reticulum-associated degradation (ERAD) pathway. Specifically required for the ERAD-L pathway which mediates the degradation of proteins with misfolded lumenal domains within the endoplasmic reticulum (ER). Facilitates retrotranslocation of misfolded proteins from the ER lumen through the ER membrane in conjunction with HRD1. Both proteins have lateral gates facing each other and distort the membrane region between the lateral gates, making it much thinner than a normal phospholipid bilayer. Substrates insert into the membrane as a hairpin loop with one strand interacting with DER1 and the other with HRD1. This is Degradation in the endoplasmic reticulum protein 1 (DER1) from Saccharomyces cerevisiae (strain ATCC 204508 / S288c) (Baker's yeast).